The following is a 269-amino-acid chain: Peptide deformylase 1A, chloroplastic/mitochondrial (269 aa).

The N-terminal 60 residues, 1–60 (MGLHRDEATAMETLFRVSLRLLPVSAAVTCRSIRFPVSRPGSSHLLNRKLYNLPTSSSSS), are a transit peptide targeting the chloroplast and mitochondrion. Substrate contacts are provided by residues 123–126 (PGVG) and Gly-187. Zn(2+) is bound at residue Cys-188. The tract at residues 191–196 (VDGFRA) is dimerization. His-230 is a Zn(2+) binding site. The active site involves Glu-231. His-234 lines the Zn(2+) pocket. The interval 236–254 (DGNLYVDKMVPRTFRTVDN) is dimerization.

The protein belongs to the polypeptide deformylase family. Homodimer. Requires Zn(2+) as cofactor. Expressed in roots, leaves, flowers and siliques.

It is found in the plastid. It localises to the chloroplast stroma. The protein localises to the mitochondrion. The catalysed reaction is N-terminal N-formyl-L-methionyl-[peptide] + H2O = N-terminal L-methionyl-[peptide] + formate. Its activity is regulated as follows. Inhibited by actinonin. Its function is as follows. Removes the formyl group from the N-terminal Met of newly synthesized proteins. The sequence is that of Peptide deformylase 1A, chloroplastic/mitochondrial (PDF1A) from Arabidopsis thaliana (Mouse-ear cress).